Reading from the N-terminus, the 590-residue chain is UvrABC system protein C (590 aa).

The 78-residue stretch at 14–91 (DQPGCYLMKD…IKKYDPKYNV (78 aa)) folds into the GIY-YIG domain. Residues 196–231 (NEVKKELEAKMLEASENLQFERAKEFRDQIAHIEST) enclose the UVR domain.

This sequence belongs to the UvrC family. Interacts with UvrB in an incision complex.

The protein resides in the cytoplasm. The UvrABC repair system catalyzes the recognition and processing of DNA lesions. UvrC both incises the 5' and 3' sides of the lesion. The N-terminal half is responsible for the 3' incision and the C-terminal half is responsible for the 5' incision. The polypeptide is UvrABC system protein C (Bacillus licheniformis (strain ATCC 14580 / DSM 13 / JCM 2505 / CCUG 7422 / NBRC 12200 / NCIMB 9375 / NCTC 10341 / NRRL NRS-1264 / Gibson 46)).